Here is a 155-residue protein sequence, read N- to C-terminus: Interleukin-2 (155 aa).

Positions 1 to 20 (MYKMQLLSCIALTLVLVANS) are cleaved as a signal peptide. T24 carries O-linked (GalNAc...) threonine glycosylation. An intrachain disulfide couples C79 to C127. N-linked (GlcNAc...) asparagine glycosylation occurs at N112.

It belongs to the IL-2 family.

Its subcellular location is the secreted. In terms of biological role, cytokine produced by activated CD4-positive helper T-cells and to a lesser extend activated CD8-positive T-cells and natural killer (NK) cells that plays pivotal roles in the immune response and tolerance. Binds to a receptor complex composed of either the high-affinity trimeric IL-2R (IL2RA/CD25, IL2RB/CD122 and IL2RG/CD132) or the low-affinity dimeric IL-2R (IL2RB and IL2RG). Interaction with the receptor leads to oligomerization and conformation changes in the IL-2R subunits resulting in downstream signaling starting with phosphorylation of JAK1 and JAK3. In turn, JAK1 and JAK3 phosphorylate the receptor to form a docking site leading to the phosphorylation of several substrates including STAT5. This process leads to activation of several pathways including STAT, phosphoinositide-3-kinase/PI3K and mitogen-activated protein kinase/MAPK pathways. Functions as a T-cell growth factor and can increase NK-cell cytolytic activity as well. Promotes strong proliferation of activated B-cells and subsequently immunoglobulin production. Plays a pivotal role in regulating the adaptive immune system by controlling the survival and proliferation of regulatory T-cells, which are required for the maintenance of immune tolerance. Moreover, participates in the differentiation and homeostasis of effector T-cell subsets, including Th1, Th2, Th17 as well as memory CD8-positive T-cells. The sequence is that of Interleukin-2 (IL2) from Canis lupus familiaris (Dog).